The following is a 215-amino-acid chain: Chaperone protein TorD (215 aa).

It belongs to the TorD/DmsD family. TorD subfamily.

It is found in the cytoplasm. In terms of biological role, involved in the biogenesis of TorA. Acts on TorA before the insertion of the molybdenum cofactor and, as a result, probably favors a conformation of the apoenzyme that is competent for acquiring the cofactor. This chain is Chaperone protein TorD, found in Shewanella piezotolerans (strain WP3 / JCM 13877).